The sequence spans 62 residues: Large ribosomal subunit protein bL28 (62 aa).

Belongs to the bacterial ribosomal protein bL28 family.

The protein is Large ribosomal subunit protein bL28 of Helicobacter acinonychis (strain Sheeba).